The following is a 543-amino-acid chain: Carotenoid 9,10(9',10')-cleavage dioxygenase 1 (543 aa).

Fe cation contacts are provided by H224, H272, H338, and H528.

This sequence belongs to the carotenoid oxygenase family. In terms of assembly, homodimer. Fe(2+) serves as cofactor.

It catalyses the reaction all-trans-zeaxanthin + 2 O2 = 4,9-dimethyldodeca-2,4,6,8,10-pentaenedial + 2 (3R)-hydroxy-beta-ionone. Functionally, cleaves a variety of carotenoids at the 9-10 and 9'-10' double bonds. Probably not involved in abscisic acid biosynthesis. This Phaseolus vulgaris (Kidney bean) protein is Carotenoid 9,10(9',10')-cleavage dioxygenase 1 (CCD1).